The primary structure comprises 343 residues: Nod factor export ATP-binding protein I (343 aa).

The span at 1–14 (MQLLTRANVSSSPS) shows a compositional bias: polar residues. The interval 1 to 38 (MQLLTRANVSSSPSRRPESNALKQKCHGHSNADNSLSR) is disordered. In terms of domain architecture, ABC transporter spans 45–275 (IELTNVSKSY…QIGCDVIEIY (231 aa)). An ATP-binding site is contributed by 77–84 (GPNGAGKS).

Belongs to the ABC transporter superfamily. Lipooligosaccharide exporter (TC 3.A.1.102) family. In terms of assembly, the complex is composed of two ATP-binding proteins (NodI) and two transmembrane proteins (NodJ).

The protein localises to the cell inner membrane. Its function is as follows. Part of the ABC transporter complex NodIJ involved in the export of the nodulation factors (Nod factors), the bacterial signal molecules that induce symbiosis and subsequent nodulation induction. Nod factors are LCO (lipo-chitin oligosaccharide), a modified beta-1,4-linked N-acetylglucosamine oligosaccharide. This subunit is responsible for energy coupling to the transport system. In Sinorhizobium fredii (strain NBRC 101917 / NGR234), this protein is Nod factor export ATP-binding protein I.